We begin with the raw amino-acid sequence, 120 residues long: Large ribosomal subunit protein uL18 (120 aa).

It belongs to the universal ribosomal protein uL18 family. As to quaternary structure, part of the 50S ribosomal subunit; part of the 5S rRNA/L5/L18/L25 subcomplex. Contacts the 5S and 23S rRNAs.

Functionally, this is one of the proteins that bind and probably mediate the attachment of the 5S RNA into the large ribosomal subunit, where it forms part of the central protuberance. The polypeptide is Large ribosomal subunit protein uL18 (Chloroherpeton thalassium (strain ATCC 35110 / GB-78)).